The sequence spans 78 residues: DGESIYINGTAPTCSSCHDRGVAGAPELNAPEDWADRPSSVDELVESTLAGKGAMPAYDGRADREDLVKAIEYMLSTL.

Heme c is bound by residues cysteine 14, cysteine 17, histidine 18, and methionine 55.

In terms of processing, binds 1 heme c group covalently per subunit.

The chain is Cytochrome c-551 from Halorhodospira halophila (Ectothiorhodospira halophila).